The primary structure comprises 420 residues: Peroxisomal biogenesis factor 3 (420 aa).

Topologically, residues 1–16 are peroxisomal; that stretch reads MPIFSSLNSFLRRHKK. A helical transmembrane segment spans residues 17-37; the sequence is KLIVTATLTFSAYFLVNQFII. Residues 38-420 are Cytoplasmic-facing; sequence KKLKNFQNSL…FSASIYSNFE (383 aa).

This sequence belongs to the peroxin-3 family.

Its subcellular location is the peroxisome membrane. Functionally, involved in peroxisome biosynthesis. The protein is Peroxisomal biogenesis factor 3 (PEX3) of Debaryomyces hansenii (strain ATCC 36239 / CBS 767 / BCRC 21394 / JCM 1990 / NBRC 0083 / IGC 2968) (Yeast).